Here is a 479-residue protein sequence, read N- to C-terminus: BURP domain-containing protein 4 (479 aa).

Positions 1-46 (MVGKGNECAAARRRFSLRAAAASSSSSSFLPCLLLAAALSAGCCRA) are cleaved as a signal peptide. The tract at residues 158-177 (RADGPPKQPATFPASPNGEK) is disordered. Residues 254–479 (LFLMKKLHPG…PQGYVLWLAN (226 aa)) enclose the BURP domain. Residue asparagine 445 is glycosylated (N-linked (GlcNAc...) asparagine).

As to expression, expressed in stamen.

The polypeptide is BURP domain-containing protein 4 (BURP4) (Oryza sativa subsp. japonica (Rice)).